The primary structure comprises 579 residues: Lens epithelium-derived growth factor (579 aa).

A PWWP domain is found at 1 to 64 (MSRDFKPGDL…PKDIFPYSEN (64 aa)). Disordered stretches follow at residues 62 to 81 (SENK…NEGL), 88 to 203 (PKVK…EEAA), 215 to 397 (AAPV…SMDS), and 492 to 579 (AEQK…FENK). The span at 94–107 (HQPSHPAVNTSIKE) shows a compositional bias: polar residues. Residues 153-173 (KEMHSTKEDEEPSEKNSKEGV) show a composition bias toward basic and acidic residues. Over residues 184–193 (VARRGRKRKA) the composition is skewed to basic residues. The short motif at 186–196 (RRGRKRKAEKQ) is the Nuclear localization signal element. Low complexity predominate over residues 215–224 (AAPVTVSPKV). A compositionally biased stretch (basic and acidic residues) spans 261–308 (EEEKAKKKGPDEKPKKQGKKDEEGQKEEEKPKKEYDKKDGKKEAEPKR). Acidic residues predominate over residues 321–330 (DSEDEGGEEE). Basic residues predominate over residues 334 to 349 (KKKGGRSFQSTHRRNI). A coiled-coil region spans residues 347–442 (RNIMRGQHEK…SMQQAQKHTE (96 aa)). Basic and acidic residues-rich tracts occupy residues 352-397 (GQHE…SMDS) and 492-522 (AEQK…KDQT). The interval 387 to 464 (MEKKRETSMD…VSQVIMEKST (78 aa)) is integrase-binding domain (IBD). Over residues 530 to 543 (GSETQDTNQSQHNG) the composition is skewed to polar residues. Residues 544-579 (ENAEEKDKLEVASKKKTCGEESELEKPAKESAFENK) show a composition bias toward basic and acidic residues.

This sequence belongs to the HDGF family.

The protein resides in the nucleus. In terms of biological role, transcriptional coactivator involved in neuroepithelial stem cell differentiation and neurogenesis. Involved in particular in lens epithelial cell gene regulation and stress responses. May play an important role in lens epithelial to fiber cell terminal differentiation. May play a protective role during stress-induced apoptosis. The polypeptide is Lens epithelium-derived growth factor (PSIP1) (Gallus gallus (Chicken)).